Consider the following 309-residue polypeptide: GATA transcription factor 25 (309 aa).

The interval Met1–Pro35 is disordered. Polar residues predominate over residues Ile8–Ala18. Positions Pro77–Gly112 constitute a Tify domain. The region spanning Arg146–Ser188 is the CCT domain. The span at Ser187–Asp202 shows a compositional bias: polar residues. Residues Ser187–Asp207 form a disordered region. The GATA-type zinc-finger motif lies at Ala208 to Lys267. A disordered region spans residues Glu290–His309. A compositionally biased stretch (polar residues) spans Ser293–His309.

Belongs to the type IV zinc-finger family. Class C subfamily. In terms of tissue distribution, predominantly expressed in shoot apices, inflorescences and roots.

The protein localises to the nucleus. Functionally, transcriptional activator that specifically binds 5'-GATA-3' or 5'-GAT-3' motifs within gene promoters. This is GATA transcription factor 25 (GATA25) from Arabidopsis thaliana (Mouse-ear cress).